A 316-amino-acid polypeptide reads, in one-letter code: Pantothenate kinase (316 aa).

Residue 95–102 (GSVAVGKS) coordinates ATP.

This sequence belongs to the prokaryotic pantothenate kinase family.

It is found in the cytoplasm. The enzyme catalyses (R)-pantothenate + ATP = (R)-4'-phosphopantothenate + ADP + H(+). The protein operates within cofactor biosynthesis; coenzyme A biosynthesis; CoA from (R)-pantothenate: step 1/5. The sequence is that of Pantothenate kinase from Sodalis glossinidius (strain morsitans).